The following is a 360-amino-acid chain: Phospho-N-acetylmuramoyl-pentapeptide-transferase (360 aa).

10 helical membrane-spanning segments follow: residues 21–41, 74–94, 97–117, 135–155, 168–188, 199–219, 236–256, 263–283, 288–308, and 338–358; these read YVTF…LWWG, MGGL…GDLG, YVWV…IDDY, LLQS…ADTA, VMPQ…VGSS, GLAI…AYLS, AGEL…FLWF, VFMG…IAVL, ILLV…ILQV, and VIVR…ATLK.

This sequence belongs to the glycosyltransferase 4 family. MraY subfamily. The cofactor is Mg(2+).

The protein localises to the cell inner membrane. The catalysed reaction is UDP-N-acetyl-alpha-D-muramoyl-L-alanyl-gamma-D-glutamyl-meso-2,6-diaminopimeloyl-D-alanyl-D-alanine + di-trans,octa-cis-undecaprenyl phosphate = di-trans,octa-cis-undecaprenyl diphospho-N-acetyl-alpha-D-muramoyl-L-alanyl-D-glutamyl-meso-2,6-diaminopimeloyl-D-alanyl-D-alanine + UMP. Its pathway is cell wall biogenesis; peptidoglycan biosynthesis. Catalyzes the initial step of the lipid cycle reactions in the biosynthesis of the cell wall peptidoglycan: transfers peptidoglycan precursor phospho-MurNAc-pentapeptide from UDP-MurNAc-pentapeptide onto the lipid carrier undecaprenyl phosphate, yielding undecaprenyl-pyrophosphoryl-MurNAc-pentapeptide, known as lipid I. This is Phospho-N-acetylmuramoyl-pentapeptide-transferase from Shewanella piezotolerans (strain WP3 / JCM 13877).